The following is a 97-amino-acid chain: Mitochondrial import inner membrane translocase subunit Tim8 A (97 aa).

The short motif at Cys43–Cys66 is the Twin CX3C motif element. 2 disulfide bridges follow: Cys43-Cys66 and Cys47-Cys62. Ser57, Ser87, Ser94, and Ser96 each carry phosphoserine.

This sequence belongs to the small Tim family. Heterohexamer; composed of 3 copies of TIMM8A and 3 copies of TIMM13, named soluble 70 kDa complex. Associates with the TIM22 complex, whose core is composed of TIMM22. In terms of tissue distribution, highly expressed in fetal and adult brain, followed by fetal lung, liver and kidney. Also expressed in heart, placenta, lung, liver, kidney, pancreas, skeletal muscle and heart.

Its subcellular location is the mitochondrion inner membrane. In terms of biological role, mitochondrial intermembrane chaperone that participates in the import and insertion of some multi-pass transmembrane proteins into the mitochondrial inner membrane. Also required for the transfer of beta-barrel precursors from the TOM complex to the sorting and assembly machinery (SAM complex) of the outer membrane. Acts as a chaperone-like protein that protects the hydrophobic precursors from aggregation and guide them through the mitochondrial intermembrane space. The TIMM8-TIMM13 complex mediates the import of proteins such as TIMM23, SLC25A12/ARALAR1 and SLC25A13/ARALAR2, while the predominant TIMM9-TIMM10 70 kDa complex mediates the import of much more proteins. Probably necessary for normal neurologic development. This is Mitochondrial import inner membrane translocase subunit Tim8 A (TIMM8A) from Homo sapiens (Human).